We begin with the raw amino-acid sequence, 167 residues long: Single-stranded DNA-binding protein 2 (167 aa).

An SSB domain is found at 1-104 (MLNRVVLVGR…VVCDSVQFLE (104 aa)). Residues 107–167 (NAQQNGGQRQ…IDISDDDLPF (61 aa)) are disordered. 2 stretches are compositionally biased toward low complexity: residues 109–118 (QQNGGQRQQN) and 132–147 (SGQN…TKQS). The Important for interaction with partner proteins signature appears at 162–167 (DDDLPF).

Homotetramer.

Plays an important role in DNA replication, recombination and repair. Binds to ssDNA and to an array of partner proteins to recruit them to their sites of action during DNA metabolism. The polypeptide is Single-stranded DNA-binding protein 2 (ssb2) (Staphylococcus aureus (strain MSSA476)).